Consider the following 124-residue polypeptide: MKPATHRDKGEQAEQLACHYLQARGLRLTQRNYHCRLGEIDLIMEDRESLVFIEVRYRRKGRFGDAIDSITPAKQARLIAAAQHYLQRTGGAQNKPCRFDVVGITSEKGADNIMWLRDAFRVES.

It belongs to the UPF0102 family.

The protein is UPF0102 protein Noc_0355 of Nitrosococcus oceani (strain ATCC 19707 / BCRC 17464 / JCM 30415 / NCIMB 11848 / C-107).